The chain runs to 330 residues: Polyprenyl transferase dpfgC (330 aa).

A glycan (N-linked (GlcNAc...) asparagine) is linked at N34. The next 7 membrane-spanning stretches (helical) occupy residues 105 to 125, 146 to 166, 175 to 192, 199 to 219, 237 to 257, 273 to 293, and 310 to 330; these read ALCV…NDWI, VTTT…WGVL, VLKH…YPFG, KLMI…AIPG, CLPL…AYSY, NIAG…IILA, and NFIL…LTSA.

The protein belongs to the UbiA prenyltransferase family. The cofactor is Mg(2+).

It is found in the membrane. Its pathway is secondary metabolite biosynthesis; terpenoid biosynthesis. Its function is as follows. Polyprenyl transferase; part of the gene cluster that mediates the biosynthesis of diterpenoid pyrones. The first step of the pathway is the synthesis of the alpha-pyrone moiety by the polyketide synthase dpfgA via condensation of one acetyl-CoA starter unit with 3 malonyl-CoA units and 2 methylations. The alpha-pyrone is then combined with geranylgeranyl pyrophosphate (GGPP) formed by the GGPP synthase dpfgD through the action of the prenyltransferase dpfgC to yield a linear alpha-pyrone diterpenoid. Subsequent steps in the diterpenoid pyrone biosynthetic pathway involve the decalin core formation, which is initiated by the epoxidation of the C10-C11 olefin by the FAD-dependent oxidoreductase dpfgE, and is followed by a cyclization cascade catalyzed by the terpene cyclase dpfgB. The short chain dehydrogenase/reductase dpfgG then oxidizes the 8S hydroxy group to a ketone and the short chain dehydrogenase/reductase dpfgH reduces the ketone to the 8R hydroxy group to yield higginsianin B. Higginsianin B is further methylated by the methyltransferase dpfgI to produce the intermediate named FDDP B. The cytochrome P450 monooxygenase dfgpJ then catalyzes a three-step oxidation at C-27 to generate a carboxylic acid as well as C-26 hydroxylation. Finally, methyltransferase dpfgK methylates the carboxylic acid generated by dpfgJ, yielding the final diterpenoid pyrones from the pathway which were named FDDP D and FDDP E. This is Polyprenyl transferase dpfgC from Gibberella zeae (strain ATCC MYA-4620 / CBS 123657 / FGSC 9075 / NRRL 31084 / PH-1) (Wheat head blight fungus).